Reading from the N-terminus, the 206-residue chain is MKHNNVIPNGHFKKHWQNYVKTWFNQPARKTRRRVARQKKAVKIFPRPTAGPLRPVVHGQTLKYNMKVRTGKGFTLEELKSAGIPKKLAPTIGIAVDHRRKNRSLEGLQSNVQRLKTYKAKLVIFPRRARKVKAGDSTAEELANATQVQGDYMPIVREKHATELVKLTTEMKSVKAFDKIRLERTNKRHAGARAKRAADAEKEEKK.

Positions 183 to 206 (ERTNKRHAGARAKRAADAEKEEKK) are disordered. Over residues 186–195 (NKRHAGARAK) the composition is skewed to basic residues. Positions 196–206 (RAADAEKEEKK) are enriched in basic and acidic residues.

This sequence belongs to the eukaryotic ribosomal protein eL13 family.

This Brassica napus (Rape) protein is Large ribosomal subunit protein eL13z.